The sequence spans 433 residues: Histone acetyltransferase type B subunit 2 (433 aa).

5 WD repeats span residues 131–171 (EHPG…LDPT), 184–224 (GHEA…ADSR), 234–274 (HHTQ…TNKA), 281–321 (GHLD…EKVH), and 325–365 (GHND…EEQL). An interaction with the histone H4 N-terminus region spans residues 367–371 (DDQDD). One copy of the WD 6 repeat lies at 382-422 (GHTNHLADFSWNPNEPWLVASAAEDNLLQIWKVAESIVGKD).

This sequence belongs to the WD repeat RBAP46/RBAP48/MSI1 family. As to quaternary structure, component of the HAT-B complex composed of at least HAT1 and HAT2. The HAT-B complex binds to histone H4 tail.

It is found in the cytoplasm. The protein localises to the nucleus. Regulatory subunit of the histone acetylase B (HAT-B) complex. The complex acetylates 'Lys-12' of histone H4 which is required for telomeric silencing. This chain is Histone acetyltransferase type B subunit 2 (HAT2), found in Gibberella zeae (strain ATCC MYA-4620 / CBS 123657 / FGSC 9075 / NRRL 31084 / PH-1) (Wheat head blight fungus).